The sequence spans 109 residues: Sulredoxin (109 aa).

A Rieske domain is found at 3–107; the sequence is WKRTISAKAL…IRDNNGWIEV (105 aa). [2Fe-2S] cluster contacts are provided by C43, H45, C62, and H65.

In terms of assembly, homooligomeric. It depends on [2Fe-2S] cluster as a cofactor.

It localises to the cytoplasm. Functionally, not yet known. The sequence is that of Sulredoxin (sdx) from Sulfurisphaera tokodaii (strain DSM 16993 / JCM 10545 / NBRC 100140 / 7) (Sulfolobus tokodaii).